We begin with the raw amino-acid sequence, 704 residues long: Metabotropic glutamate receptor-like protein K (704 aa).

The signal sequence occupies residues 1 to 21 (MIKLILSIILIICFIINSIES). Residues 22–383 (FKMITLTTGP…SKVEFQRSIQ (362 aa)) lie on the Extracellular side of the membrane. N-linked (GlcNAc...) asparagine glycosylation is found at Asn66, Asn104, Asn256, Asn286, Asn308, Asn337, Asn343, and Asn368. A helical membrane pass occupies residues 384-404 (IGFSIVSGLLIGFVILMMIGI). At 405–419 (VKYQDTPSIRSASPS) the chain is on the cytoplasmic side. The helical transmembrane segment at 420–440 (FLNLTLLGGVIIFIGIIVWVA) threads the bilayer. The Extracellular segment spans residues 441 to 455 (PISTHQCNARFWLVT). Residues 456–476 (IGFSTLIGSLVVKNIRIWLIF) form a helical membrane-spanning segment. The Cytoplasmic segment spans residues 477–492 (DNPELKIRTITNNQLY). The helical transmembrane segment at 493 to 513 (PWVGLCLVINIVLMSIITTVG) threads the bilayer. Residues 514–541 (DLKAIEAQGIDSLGKFEYMTICKMNYTG) lie on the Extracellular side of the membrane. Asn538 is a glycosylation site (N-linked (GlcNAc...) asparagine). A helical transmembrane segment spans residues 542–562 (AATLYSILAYFGTLLLVGVFV). Residues 563–578 (SWKIRIVHIEEFSECT) lie on the Cytoplasmic side of the membrane. The chain crosses the membrane as a helical span at residues 579–599 (AIAKTLYSISFCLFVIVPLMI). Residues 600–608 (SPQDKQSET) are Extracellular-facing. Residues 609-629 (IILCVTGIFITTGALLIFFLP) traverse the membrane as a helical segment. The Cytoplasmic segment spans residues 630 to 704 (KFWRIFGNEK…NESSLSNETK (75 aa)). Disordered stretches follow at residues 657-677 (ARAE…SKSS) and 685-704 (SGIE…NETK).

In the N-terminal section; belongs to the BMP lipoprotein family. It in the C-terminal section; belongs to the G-protein coupled receptor 3 family. GABA-B receptor subfamily.

It localises to the membrane. This Dictyostelium discoideum (Social amoeba) protein is Metabotropic glutamate receptor-like protein K (grlK).